The primary structure comprises 1028 residues: Kinesin-like protein KIF28 (1028 aa).

The region spanning 11-358 (SVRVAVRVRP…LRYAERAKKV (348 aa)) is the Kinesin motor domain. Position 114–121 (114–121 (GQTGSGKS)) interacts with ATP. The FHA domain maps to 460 to 523 (CDVGRAASNA…LQHLDRIILG (64 aa)). A coiled-coil region spans residues 873–902 (NQVPELYQKLLKLEQETELLRDVNRALRGE).

It belongs to the TRAFAC class myosin-kinesin ATPase superfamily. Kinesin family.

It is found in the mitochondrion membrane. Its function is as follows. Microtubule-dependent motor protein required for mitochondrion morphology and transport of mitochondria in neuronal cells. The protein is Kinesin-like protein KIF28 of Mus musculus (Mouse).